We begin with the raw amino-acid sequence, 368 residues long: Probable dual-specificity RNA methyltransferase RlmN (368 aa).

Catalysis depends on Glu109, which acts as the Proton acceptor. The Radical SAM core domain maps to 115-355 (YPDRVTMCIS…VTIRDTRGQE (241 aa)). A disulfide bridge connects residues Cys122 and Cys360. The [4Fe-4S] cluster site is built by Cys129, Cys133, and Cys136. S-adenosyl-L-methionine contacts are provided by residues 184–185 (GE), Ser218, 241–243 (SLH), and Asn317. Cys360 serves as the catalytic S-methylcysteine intermediate.

This sequence belongs to the radical SAM superfamily. RlmN family. [4Fe-4S] cluster is required as a cofactor.

It localises to the cytoplasm. It carries out the reaction adenosine(2503) in 23S rRNA + 2 reduced [2Fe-2S]-[ferredoxin] + 2 S-adenosyl-L-methionine = 2-methyladenosine(2503) in 23S rRNA + 5'-deoxyadenosine + L-methionine + 2 oxidized [2Fe-2S]-[ferredoxin] + S-adenosyl-L-homocysteine. The enzyme catalyses adenosine(37) in tRNA + 2 reduced [2Fe-2S]-[ferredoxin] + 2 S-adenosyl-L-methionine = 2-methyladenosine(37) in tRNA + 5'-deoxyadenosine + L-methionine + 2 oxidized [2Fe-2S]-[ferredoxin] + S-adenosyl-L-homocysteine. Specifically methylates position 2 of adenine 2503 in 23S rRNA and position 2 of adenine 37 in tRNAs. This Streptomyces coelicolor (strain ATCC BAA-471 / A3(2) / M145) protein is Probable dual-specificity RNA methyltransferase RlmN.